The sequence spans 576 residues: Alkaline phosphatase PhoD (576 aa).

An N-terminal signal peptide occupies residues 1 to 32 (MNSLLHHSFLKTVFSSLAIAIVTSSLSSVTIA). Zn(2+) is bound by residues aspartate 68 and threonine 107. The Phosphothreonine intermediate role is filled by threonine 107. Cysteine 108 and cysteine 144 are disulfide-bonded. Substrate-binding positions include asparagine 128 and 188–190 (KDR). Cysteine 248 and cysteine 332 are joined by a disulfide. Positions 318, 322, 363, 364, and 508 each coordinate Zn(2+). Cysteine 562 and cysteine 573 form a disulfide bridge.

Monomer. Zn(2+) serves as cofactor.

The catalysed reaction is a phosphate monoester + H2O = an alcohol + phosphate. Functionally, alkaline phosphatase with broad substrate specificity. Has phosphatase activity towards nucleotide and sugar phosphates with a preference to nucleotide phosphates. Has no phosphodiesterase activity. The protein is Alkaline phosphatase PhoD of Zymomonas mobilis subsp. mobilis (strain ATCC 31821 / ZM4 / CP4).